The sequence spans 360 residues: UDP-N-acetylglucosamine--N-acetylmuramyl-(pentapeptide) pyrophosphoryl-undecaprenol N-acetylglucosamine transferase (360 aa).

UDP-N-acetyl-alpha-D-glucosamine-binding residues include serine 198 and glutamine 289.

The protein belongs to the glycosyltransferase 28 family. MurG subfamily.

It localises to the cell membrane. It catalyses the reaction Mur2Ac(oyl-L-Ala-gamma-D-Glu-L-Lys-D-Ala-D-Ala)-di-trans,octa-cis-undecaprenyl diphosphate + UDP-N-acetyl-alpha-D-glucosamine = beta-D-GlcNAc-(1-&gt;4)-Mur2Ac(oyl-L-Ala-gamma-D-Glu-L-Lys-D-Ala-D-Ala)-di-trans,octa-cis-undecaprenyl diphosphate + UDP + H(+). It functions in the pathway cell wall biogenesis; peptidoglycan biosynthesis. Cell wall formation. Catalyzes the transfer of a GlcNAc subunit on undecaprenyl-pyrophosphoryl-MurNAc-pentapeptide (lipid intermediate I) to form undecaprenyl-pyrophosphoryl-MurNAc-(pentapeptide)GlcNAc (lipid intermediate II). This is UDP-N-acetylglucosamine--N-acetylmuramyl-(pentapeptide) pyrophosphoryl-undecaprenol N-acetylglucosamine transferase from Streptococcus pyogenes serotype M12 (strain MGAS2096).